We begin with the raw amino-acid sequence, 667 residues long: Probable E3 ubiquitin ligase complex SCF subunit sconB (667 aa).

Residues 1–55 (MNGSGSTAKESLFNPTPRKLGLPEDNTMTPYNGVRSIFDNSSGSRQLTDEHTNQE) are disordered. In terms of domain architecture, F-box spans 182–228 (IDFITALPPEISFKILSYLDTASLCRAAQVSRAWKCLADDDVVWHRM). 7 WD repeats span residues 347-386 (GHTNGVMCLQFEDNILATGSYDMTIKIWDMETGEELRTLT), 388-426 (HTSGIRCLQFDDTKLISGSIDRTLKVWNWRTGECISTYT), 428-464 (HLGGIIGLHFENSVLASGSIDNTVKIWNFEDKSTFLL), 466-507 (GHSD…RTFQ), 549-593 (RQEP…CLRT), 594-633 (FFGHLEGVWALSADTLRIVSGAEDRMVKIWDPRTGKCERT), and 636-667 (GHSGPVTCVGLGDSCFVTGSEDCEVRIHSFKN). A disordered region spans residues 528 to 562 (DHDAGHEEDSNASVSGDESPLRQEPCSPGASFFEG).

Belongs to the WD repeat MET30/SCONB/SCON-2 family. In terms of assembly, component of the SCF(sconB) E3 ubiquitin ligase complex.

It participates in protein modification; protein ubiquitination. Component of the SCF(sconB) E3 ubiquitin ligase complex involved in the regulation of sulfur metabolite repression, probably by mediating the inactivation or degradation of the metR transcription factor. The protein is Probable E3 ubiquitin ligase complex SCF subunit sconB (sconB) of Talaromyces stipitatus (strain ATCC 10500 / CBS 375.48 / QM 6759 / NRRL 1006) (Penicillium stipitatum).